Reading from the N-terminus, the 116-residue chain is Protein aq_1857 (116 aa).

The protein belongs to the HesB/IscA family.

The protein is Protein aq_1857 of Aquifex aeolicus (strain VF5).